The primary structure comprises 463 residues: uncharacterized protein (463 aa).

Helical transmembrane passes span isoleucine 3–valine 23, valine 88–alanine 108, alanine 112–leucine 132, phenylalanine 216–tryptophan 236, leucine 245–isoleucine 265, and leucine 276–valine 296. Positions valine 303–serine 322 are disordered. The span at glycine 306–alanine 316 shows a compositional bias: pro residues. Transmembrane regions (helical) follow at residues valine 323 to glycine 343 and alanine 419 to valine 439.

Belongs to the mycobacterial PPE family.

It localises to the cell membrane. This is an uncharacterized protein from Mycobacterium tuberculosis (strain CDC 1551 / Oshkosh).